A 403-amino-acid polypeptide reads, in one-letter code: Enoyl-[acyl-carrier-protein] reductase [NADH] (403 aa).

NAD(+) is bound by residues glycine 49–tyrosine 54, phenylalanine 75–glutamate 76, aspartate 112–alanine 113, and leucine 141–alanine 142. Position 227 (tyrosine 227) interacts with substrate. Catalysis depends on tyrosine 237, which acts as the Proton donor. NAD(+)-binding positions include lysine 246 and valine 276–threonine 278.

This sequence belongs to the TER reductase family. Monomer.

It catalyses the reaction a 2,3-saturated acyl-[ACP] + NAD(+) = a (2E)-enoyl-[ACP] + NADH + H(+). It participates in lipid metabolism; fatty acid biosynthesis. In terms of biological role, involved in the final reduction of the elongation cycle of fatty acid synthesis (FAS II). Catalyzes the reduction of a carbon-carbon double bond in an enoyl moiety that is covalently linked to an acyl carrier protein (ACP). The chain is Enoyl-[acyl-carrier-protein] reductase [NADH] from Pseudomonas putida (strain GB-1).